A 267-amino-acid chain; its full sequence is MDLDLLARIKRHEVLAAIRAGERIDGRDFEEFRPIEVRAGVISKANGSALVRLGNTQLVVGVKLEVGRPYPDSPNEGALAVNAELVPLADPSFEPGPPDENAIELSRVVDRGIRESEMIDLEELCIEEGEHCWVTFVDIHVLDHDGNLFDASMIGSVSALSITEVPKAEVVDDEVEVMEEDTEPLAINDFPISVTIAKVGEYLLVDPCLEEEVIMDTRLTVTVTESGEVCAVQKGELGDFPEHLLEDAIDLATKKAEEVRRTVKAQL.

The protein belongs to the RNase PH family. Rrp42 subfamily. Component of the archaeal exosome complex. Forms a hexameric ring-like arrangement composed of 3 Rrp41-Rrp42 heterodimers. The hexameric ring associates with a trimer of Rrp4 and/or Csl4 subunits.

It is found in the cytoplasm. Its function is as follows. Non-catalytic component of the exosome, which is a complex involved in RNA degradation. Contributes to the structuring of the Rrp41 active site. This is Exosome complex component Rrp42 from Methanopyrus kandleri (strain AV19 / DSM 6324 / JCM 9639 / NBRC 100938).